Consider the following 161-residue polypeptide: Nucleotide-binding protein lpl1175 (161 aa).

The protein belongs to the YajQ family.

In terms of biological role, nucleotide-binding protein. This chain is Nucleotide-binding protein lpl1175, found in Legionella pneumophila (strain Lens).